Consider the following 388-residue polypeptide: D-xylose dehydrogenase (388 aa).

Belongs to the Gfo/Idh/MocA family. In terms of assembly, homotetramer. Zn(2+) serves as cofactor.

The catalysed reaction is D-xylose + NADP(+) = D-xylono-1,5-lactone + NADPH + H(+). The enzyme catalyses D-xylose + NAD(+) = D-xylono-1,5-lactone + NADH + H(+). Its pathway is carbohydrate metabolism; D-xylose degradation. Functionally, catalyzes the NADP(+)-dependent oxidation of D-xylose. Is able to use both NADP(+) and NAD(+); however, the enzyme shows a very strong preference for NADP(+). Is likely involved in the first step of the oxidative D-xylose degradation pathway. This Paenarthrobacter nicotinovorans (Arthrobacter nicotinovorans) protein is D-xylose dehydrogenase (xdh).